A 74-amino-acid polypeptide reads, in one-letter code: M-myrmeciitoxin-Mb1a (74 aa).

The N-terminal stretch at 1 to 26 is a signal peptide; that stretch reads MKLSCLLLTLAIIVVLTIVHAPNVEA. Residues 27–50 constitute a propeptide that is removed on maturation; the sequence is KALADPESDAVGFADAVGEADPNA. Glutamine 73 is subject to Glutamine amide.

This sequence belongs to the formicidae venom precursor-01 superfamily. Ant pilosulin family. As to expression, expressed by the venom gland.

Its subcellular location is the secreted. Functionally, shows moderate activity against E.coli and S.aureus (MIC&lt;25 uM), slight activity against B.subtilis (MIC&lt;50 uM), and no activity against L.garvieae, P.aeruginosa, C.albicans, and S.cerevisiae. Has no hemolytic nor cytolytic activity. Causes an IgE-independent histamine release. This is M-myrmeciitoxin-Mb1a from Myrmecia banksi (Jack jumper ant).